Reading from the N-terminus, the 462-residue chain is Citrate synthase, mitochondrial (462 aa).

Residues 1-21 (MRSINQLLKQASLSQKSQYNF) constitute a mitochondrion transit peptide. Catalysis depends on residues His-300, His-346, and Asp-401.

It belongs to the citrate synthase family. In terms of assembly, homodimer.

The protein resides in the mitochondrion matrix. It localises to the cytoplasm. Its subcellular location is the cytoskeleton. The catalysed reaction is oxaloacetate + acetyl-CoA + H2O = citrate + CoA + H(+). It participates in carbohydrate metabolism; tricarboxylic acid cycle; isocitrate from oxaloacetate: step 1/2. Functionally, structural protein involved in oral morphogenesis and in pronuclear behavior during conjugation. Respiratory enzyme. This is Citrate synthase, mitochondrial from Tetrahymena thermophila.